The chain runs to 484 residues: Transcription factor MYB88 (484 aa).

A disordered region spans residues 1 to 20; it reads MEETTKQNNMKKKKKILLHS. Positions 13–20 match the Nuclear localization signal motif; sequence KKKILLHS. 2 HTH myb-type domains span residues 25–76 and 77–131; these read KKER…YTYL and NSDF…KKRA. 2 consecutive DNA-binding regions (H-T-H motif) follow at residues 53–76 and 104–127; these read WAII…YTYL and WTEI…TTLC. 3 disordered regions span residues 215–241, 321–383, and 458–484; these read NATS…DKSN, RSSN…GGEL, and GVES…LDSL. The segment covering 232–241 has biased composition (basic and acidic residues); the sequence is KESDGEDKSN. A compositionally biased stretch (low complexity) spans 339 to 348; it reads SPASSEYSSG. Positions 354–380 are enriched in polar residues; that stretch reads TIMTHPSGDKTQQLMSDTQTTSHQQNG. A compositionally biased stretch (pro residues) spans 463–476; sequence SPYPSANPSQPPPC.

Interacts with RBR1. As to expression, expressed at low levels in all organs including roots, leaves, hypocotyls stems, flowers, siliques and buds.

The protein localises to the nucleus. In terms of biological role, transcription factor that binds to DNA in promoters cis-regulatory element 5'-GGCGCGC-3' of cell cycle genes, including cyclins, cyclin-dependent kinases (CDKs), and components of the pre-replication complex. Binds to DNA in promoters cis-regulatory element 5'-AGCCG-3' of auxin regulated genes (e.g. PIN3 and PIN7). Together with FAMA and MYB124, ensures that stomata contain just two guard cells (GCs) by enforcing a single symmetric precursor cell division before stomatal maturity. Represses the expression of the mitosis-inducing factors CDKB1-1 and CDKA-1, specifically required for the last guard mother cells (GMC) symmetric divisions in the stomatal pathway. Represses CYCA2-3 in newly formed guard cells. Together with MYB88, regulates stomata spacing by restricting divisions late in the stomatal cell lineage thus limiting the number of GMC divisions. In collaboration with CDKB1-1 and CDKB1-2, restrict the G1/S transition and chloroplast and nuclear number during stomatal formation, and normally maintain fate and developmental progression throughout the stomatal cell lineage. Involved in sensing and/or transducing abiotic stress (e.g. drought and salt), probably via the positive regulation of NAC019. Regulates female reproduction being required for entry into megasporogenesis, probably via the regulation of cell cycle genes. Plays a minor role in lateral roots (LRs) initiation. Involved complementarily in establishing the gravitropic set-point angles of lateral roots by regulating the transcription of PIN3 and PIN7 in gravity-sensing cells of primary and lateral roots. The protein is Transcription factor MYB88 of Arabidopsis thaliana (Mouse-ear cress).